The chain runs to 136 residues: MTERTLVLIKPDGIERQLIGEIISRIERKGLTIAALQLRTVSAELASQHYAEHEGKPFFGSLLEFITSGPVVAAIVEGTRAIAAVRQLAGGTDPVQAAAPGTIRGDFALETQFNLVHGSDSAESAQREIALWFPGA.

The ATP site is built by Lys10, Phe58, Arg86, Thr92, Arg104, and Asn114. Residue His117 is the Pros-phosphohistidine intermediate of the active site.

It belongs to the NDK family. In terms of assembly, homohexamer. Mg(2+) serves as cofactor.

It is found in the cytoplasm. The enzyme catalyses a 2'-deoxyribonucleoside 5'-diphosphate + ATP = a 2'-deoxyribonucleoside 5'-triphosphate + ADP. The catalysed reaction is a ribonucleoside 5'-diphosphate + ATP = a ribonucleoside 5'-triphosphate + ADP. Its function is as follows. Major role in the synthesis of nucleoside triphosphates other than ATP. The ATP gamma phosphate is transferred to the NDP beta phosphate via a ping-pong mechanism, using a phosphorylated active-site intermediate. The polypeptide is Nucleoside diphosphate kinase (Mycobacterium bovis (strain ATCC BAA-935 / AF2122/97)).